A 203-amino-acid polypeptide reads, in one-letter code: GTP-binding protein YPTM2 (203 aa).

GTP is bound by residues 15-23 (GDSGVGKSC), 33-40 (YLDSYIST), 63-67 (DTAGQ), 121-124 (NKSD), and 151-153 (SAK). Positions 37–45 (YISTIGVDF) match the Effector region motif. 2 S-geranylgeranyl cysteine lipidation sites follow: cysteine 200 and cysteine 201.

This sequence belongs to the small GTPase superfamily. Rab family. Its expression is weak in stems, higher in roots, leaves and coleoptiles, but highest in flowers.

The protein resides in the cell membrane. Protein transport. Probably involved in vesicular traffic. The protein is GTP-binding protein YPTM2 (YPTM2) of Zea mays (Maize).